We begin with the raw amino-acid sequence, 106 residues long: Probable NADP-dependent dehydrogenase in aabA 3'region (106 aa).

4 to 28 contacts NADP(+); sequence LITGASSGFGWEAAKLCVAKGHRVI.

This sequence belongs to the short-chain dehydrogenases/reductases (SDR) family.

The chain is Probable NADP-dependent dehydrogenase in aabA 3'region from Dichelobacter nodosus (Bacteroides nodosus).